Reading from the N-terminus, the 252-residue chain is 5-oxoprolinase subunit A (252 aa).

The protein belongs to the LamB/PxpA family. Forms a complex composed of PxpA, PxpB and PxpC.

It catalyses the reaction 5-oxo-L-proline + ATP + 2 H2O = L-glutamate + ADP + phosphate + H(+). Catalyzes the cleavage of 5-oxoproline to form L-glutamate coupled to the hydrolysis of ATP to ADP and inorganic phosphate. The polypeptide is 5-oxoprolinase subunit A (Mycolicibacterium paratuberculosis (strain ATCC BAA-968 / K-10) (Mycobacterium paratuberculosis)).